Consider the following 126-residue polypeptide: UPF0102 protein HD_0802 (126 aa).

The protein belongs to the UPF0102 family.

The sequence is that of UPF0102 protein HD_0802 from Haemophilus ducreyi (strain 35000HP / ATCC 700724).